A 531-amino-acid chain; its full sequence is Conglutin beta 1 (531 aa).

The signal sequence occupies residues 1–30 (MGKMRVRFPTLVLVLGIVFLMAVSIGIAYG). Positions 31 to 108 (EKDVLKSHER…EQQQGSPSYS (78 aa)) are excised as a propeptide. 2 stretches are compositionally biased toward basic and acidic residues: residues 37-51 (SHERPEEREQEEWQP) and 79-99 (SGYERRQYHERSEQREEREQE). Disordered stretches follow at residues 37–124 (SHER…RFQT), 283–302 (QEYEEQRRGQEQSHQDEGVI), and 314–337 (TKYAQSSSGKDKPSQSGPFNLRSN). The 159-residue stretch at 115-273 (YHFNSQRFQT…TFNTRYEEIQ (159 aa)) folds into the Cupin type-1 1 domain. Residues 286 to 302 (EEQRRGQEQSHQDEGVI) show a composition bias toward basic and acidic residues. Positions 316–337 (YAQSSSGKDKPSQSGPFNLRSN) are enriched in polar residues. Residues 332 to 494 (FNLRSNEPIY…TFPGSAEDIE (163 aa)) enclose the Cupin type-1 2 domain. The N-linked (GlcNAc...) asparagine glycan is linked to asparagine 444. Residues 508-531 (ALPQQQQQSEKEGRRGRRGPISSI) are disordered.

The protein belongs to the 7S seed storage protein family.

Functionally, seed storage protein. Accumulates during seed development and is hydrolyzed after germination to provide a carbon and nitrogen source for the developing seedling. Has a lectin-like activity. The polypeptide is Conglutin beta 1 (Lupinus albus (White lupine)).